A 269-amino-acid chain; its full sequence is 4-hydroxy-tetrahydrodipicolinate reductase (269 aa).

Residues 10–15 (GANGRM), E36, 99–101 (GTT), and 123–126 (AANF) contribute to the NAD(+) site. H156 functions as the Proton donor/acceptor in the catalytic mechanism. Residue H157 participates in (S)-2,3,4,5-tetrahydrodipicolinate binding. K160 serves as the catalytic Proton donor. (S)-2,3,4,5-tetrahydrodipicolinate is bound at residue 166-167 (GT).

It belongs to the DapB family.

The protein localises to the cytoplasm. It catalyses the reaction (S)-2,3,4,5-tetrahydrodipicolinate + NAD(+) + H2O = (2S,4S)-4-hydroxy-2,3,4,5-tetrahydrodipicolinate + NADH + H(+). It carries out the reaction (S)-2,3,4,5-tetrahydrodipicolinate + NADP(+) + H2O = (2S,4S)-4-hydroxy-2,3,4,5-tetrahydrodipicolinate + NADPH + H(+). Its pathway is amino-acid biosynthesis; L-lysine biosynthesis via DAP pathway; (S)-tetrahydrodipicolinate from L-aspartate: step 4/4. Its function is as follows. Catalyzes the conversion of 4-hydroxy-tetrahydrodipicolinate (HTPA) to tetrahydrodipicolinate. This Neisseria meningitidis serogroup C (strain 053442) protein is 4-hydroxy-tetrahydrodipicolinate reductase.